Reading from the N-terminus, the 77-residue chain is MAIEKGEAFARRDIYIDYDFEDVTYRWDHRQGTIHVRFYGEAESPEPVEHDNRLFNDALRFGREITREEYETGFPKG.

In terms of biological role, immunity protein that plays a role in preventing early activation of toxin Tas1. In Pseudomonas aeruginosa (strain UCBPP-PA14), this protein is Immune protein Tis1 (tis1).